Here is an 88-residue protein sequence, read N- to C-terminus: uncharacterized protein (88 aa).

This is an uncharacterized protein from Mycobacterium tuberculosis (strain CDC 1551 / Oshkosh).